Consider the following 398-residue polypeptide: E3 ubiquitin-protein ligase MARCHF11 (398 aa).

The span at Met-1 to Ser-14 shows a compositional bias: basic and acidic residues. A disordered region spans residues Met-1–Gln-158. Pro residues predominate over residues Pro-19–Gly-31. 2 stretches are compositionally biased toward basic and acidic residues: residues Glu-94–Leu-104 and Ala-121–Thr-130. The RING-CH-type zinc-finger motif lies at Gln-158–Thr-218. Residues Cys-166, Cys-169, Cys-182, Cys-184, His-192, Cys-195, Cys-208, and Cys-211 each coordinate Zn(2+). The next 2 membrane-spanning stretches (helical) occupy residues Met-241–Ser-261 and Ile-274–Ile-294. Positions Tyr-367–Leu-370 match the YXXL motif motif. Residues Val-395–Val-398 carry the PDZ-binding motif.

As to quaternary structure, interacts (YXXL motif) with AP1M1. Interacts (via PDZ-binding motif) with LIN7A. Interacts with unidentified fucose glycoproteins. Predominantly expressed in testis. Present in early developing spermatids. Not present in spermatogonia, spermatocytes or somatic cells (i.e. peritubular, Leydig, and Sertoli cells). Present in early round spermatids at step 4, remains until step 11, then it decreases at steps 12-15, and diminishes after step 16 (at protein level). Also expressed at lower level in brain.

It localises to the cytoplasmic vesicle membrane. It carries out the reaction S-ubiquitinyl-[E2 ubiquitin-conjugating enzyme]-L-cysteine + [acceptor protein]-L-lysine = [E2 ubiquitin-conjugating enzyme]-L-cysteine + N(6)-ubiquitinyl-[acceptor protein]-L-lysine.. It participates in protein modification; protein ubiquitination. Functionally, E3 ubiquitin-protein ligase that mediates polyubiquitination of CD4. E3 ubiquitin ligases accept ubiquitin from an E2 ubiquitin-conjugating enzyme in the form of a thioester and then directly transfer the ubiquitin to targeted substrates. May play a role in ubuquitin-dependent protein sorting in developmenting spermatids. This Rattus norvegicus (Rat) protein is E3 ubiquitin-protein ligase MARCHF11 (Marchf11).